The primary structure comprises 353 residues: Bone morphogenetic protein 2 (353 aa).

A propeptide spanning residues 1–239 is cleaved from the precursor; it reads GSLKRPEDLL…GHPLHKREKR (239 aa). 3 N-linked (GlcNAc...) asparagine glycosylation sites follow: asparagine 91, asparagine 121, and asparagine 157. Residues 228–248 are disordered; it reads GKGHPLHKREKRQAKHKQRKR. Over residues 231–248 the composition is skewed to basic residues; the sequence is HPLHKREKRQAKHKQRKR. Cystine bridges form between cysteine 253-cysteine 318, cysteine 282-cysteine 350, and cysteine 286-cysteine 352. Asparagine 295 carries N-linked (GlcNAc...) asparagine glycosylation.

This sequence belongs to the TGF-beta family. In terms of assembly, homodimer; disulfide-linked.

It is found in the secreted. Functionally, negatively regulates the structure and function of the limb apical ectodermal ridge. This Gallus gallus (Chicken) protein is Bone morphogenetic protein 2 (BMP2).